We begin with the raw amino-acid sequence, 390 residues long: Protein PIN-LIKES 3 (390 aa).

The Lumenal portion of the chain corresponds to 1 to 14; that stretch reads MVKLLELFITSSKP. Residues 15–35 form a helical membrane-spanning segment; that stretch reads VVEILLITSVGFYMALDGVNL. The Cytoplasmic portion of the chain corresponds to 36-43; it reads LGHDARKY. Residues 44 to 61 traverse the membrane as a helical segment; it reads LNNIVFYVFSPSLIGSRL. Over 62–76 the chain is Lumenal; the sequence is ADSVTYESLVKMWFM. A helical transmembrane segment spans residues 77 to 97; it reads PVNVLLTFIIGSLLGWIVIVI. The Cytoplasmic segment spans residues 98-107; it reads TKPPSHLRGL. A helical transmembrane segment spans residues 108 to 128; sequence ILGCCAAGNLGNMPLIIIPAV. The Lumenal segment spans residues 129–144; that stretch reads CKEKGGPFGDPESCQK. The helical transmembrane segment at 145–165 threads the bilayer; that stretch reads YGMGYVALSMAMGSIYIWTYV. Topologically, residues 166–227 are cytoplasmic; that stretch reads YNLMRVLSNS…SLSQKVNLKT (62 aa). A helical membrane pass occupies residues 228-248; it reads IFAPSTIAAMIALVIGLITPL. Residues 249–265 are Lumenal-facing; that stretch reads RKLIIGTEAPLRVLQDS. Residues 266 to 286 form a helical membrane-spanning segment; the sequence is VTLVGDGAVPAMTMIIGGNLL. The Cytoplasmic segment spans residues 287–297; that stretch reads KGLRSSGMKMS. The helical transmembrane segment at 298–318 threads the bilayer; that stretch reads SIIGVLVARYVLLPMSGVLIV. Residues 319-331 are Lumenal-facing; the sequence is RGAYKLDLVTSEP. Residues 332–352 form a helical membrane-spanning segment; it reads LYQFVLLLQYAVPPAMNLGTI. Topologically, residues 353-364 are cytoplasmic; sequence TQLFGTGESECS. Residues 365 to 385 form a helical membrane-spanning segment; it reads VIMLWTYSLASIALTVWPTFF. The Lumenal portion of the chain corresponds to 386–390; that stretch reads MWLVA.

Belongs to the auxin efflux carrier (TC 2.A.69.2) family. As to expression, expressed in seedlings, rosette and cauline leaves, flowers and siliques.

Its subcellular location is the endoplasmic reticulum membrane. Functionally, involved in cellular auxin homeostasis by regulating auxin metabolism. Regulates intracellular auxin accumulation at the endoplasmic reticulum and thus auxin availability for nuclear auxin signaling. This is Protein PIN-LIKES 3 (PILS3) from Arabidopsis thaliana (Mouse-ear cress).